The sequence spans 97 residues: Small ribosomal subunit protein bS6 (97 aa).

Belongs to the bacterial ribosomal protein bS6 family.

Functionally, binds together with bS18 to 16S ribosomal RNA. This Listeria innocua serovar 6a (strain ATCC BAA-680 / CLIP 11262) protein is Small ribosomal subunit protein bS6.